The sequence spans 324 residues: Probable UDP-sugar transporter protein SLC35A4 (324 aa).

The Cytoplasmic segment spans residues 1-18 (MSVEDGGVPGLGRPRKAR). Residues 19–39 (WTLMLLLSTAMYGAHAPLLAL) form a helical membrane-spanning segment. Over 40–52 (CHVDGRVPFRPSS) the chain is Lumenal. The helical transmembrane segment at 53-73 (AVLLTELTKLLLCALSLLVGW) threads the bilayer. Topologically, residues 74–85 (QAWPQGTPPWRQ) are cytoplasmic. Residues 86–106 (AAPFALSALLYGANNNLVIYL) form a helical membrane-spanning segment. The Lumenal segment spans residues 107-141 (QRYMDPSTYQVLSNLKIGSTALFYCLCLRHRLSAR). The helical transmembrane segment at 142–162 (QGLALLLLMAAGACYAAGGLQ) threads the bilayer. Topologically, residues 163 to 180 (DPGTTLPGPPSAAATSPM) are cytoplasmic. Residues 181–201 (PLHITPLGLLLLILYCLISGL) form a helical membrane-spanning segment. Residues 202-214 (SSVYTELLMKRQR) lie on the Lumenal side of the membrane. A helical membrane pass occupies residues 215–235 (LPLALQNLFLYSFGVLLNLGL). At 236–248 (HAGGGPGPGLLEG) the chain is on the cytoplasmic side. The helical transmembrane segment at 249-271 (FSGWMALVVLSQALNGLLMSAVM) threads the bilayer. The Lumenal segment spans residues 272-275 (KHGS). The helical transmembrane segment at 276–298 (SITRLFVVSCSLVVNAVLSAALL) threads the bilayer. The Cytoplasmic portion of the chain corresponds to 299-324 (RLQLTAAFFLATLLIGLAVRLYYGSR).

This sequence belongs to the nucleotide-sugar transporter family. SLC35A subfamily. As to quaternary structure, found in a complex with SLC35A2 and SLC35A3.

It is found in the golgi apparatus membrane. It carries out the reaction CDP-L-ribitol(in) + CDP(out) = CDP-L-ribitol(out) + CDP(in). Functionally, mediates the transport of CDP-ribitol. Does not exhibit CMP-sialic acid, UDP-galactose and UDP-N-acetylglucosamine transport activity. The sequence is that of Probable UDP-sugar transporter protein SLC35A4 from Bos taurus (Bovine).